The primary structure comprises 510 residues: NAD(P)H-quinone oxidoreductase subunit 2 B, chloroplastic (510 aa).

A run of 12 helical transmembrane segments spans residues 24–44 (LLLF…GLIL), 59–79 (WFYF…LFRW), 99–119 (IFQF…VEYI), 124–144 (MAIT…MFLC), 149–169 (LITI…LSGY), 183–203 (YLLM…WLYG), 229–249 (ISIA…PAPF), 295–315 (WHLL…LLAI), 323–343 (MLAY…IVGD), 354–374 (YMLF…LFGL), 395–415 (ALSL…AGFF), and 418–438 (LYLF…IGLL).

This sequence belongs to the complex I subunit 2 family. NDH is composed of at least 16 different subunits, 5 of which are encoded in the nucleus.

The protein localises to the plastid. The protein resides in the chloroplast thylakoid membrane. It catalyses the reaction a plastoquinone + NADH + (n+1) H(+)(in) = a plastoquinol + NAD(+) + n H(+)(out). It carries out the reaction a plastoquinone + NADPH + (n+1) H(+)(in) = a plastoquinol + NADP(+) + n H(+)(out). Its function is as follows. NDH shuttles electrons from NAD(P)H:plastoquinone, via FMN and iron-sulfur (Fe-S) centers, to quinones in the photosynthetic chain and possibly in a chloroplast respiratory chain. The immediate electron acceptor for the enzyme in this species is believed to be plastoquinone. Couples the redox reaction to proton translocation, and thus conserves the redox energy in a proton gradient. The sequence is that of NAD(P)H-quinone oxidoreductase subunit 2 B, chloroplastic from Lolium perenne (Perennial ryegrass).